Consider the following 484-residue polypeptide: Putative beta-barrel assembly-enhancing protease (484 aa).

An N-terminal signal peptide occupies residues Met1 to Ala23. His133 is a binding site for Zn(2+). Residue Glu134 is part of the active site. 2 residues coordinate Zn(2+): His137 and Glu198. Asp202 acts as the Proton donor in catalysis. TPR repeat units follow at residues Pro307 to Asn340, His341 to Asn374, Val376 to Asp408, and Ala426 to Gly459.

It belongs to the peptidase M48 family. BepA subfamily. Requires Zn(2+) as cofactor.

The protein resides in the periplasm. In terms of biological role, functions both as a chaperone and a metalloprotease. Maintains the integrity of the outer membrane by promoting either the assembly or the elimination of outer membrane proteins, depending on their folding state. This Vibrio cholerae serotype O1 (strain ATCC 39315 / El Tor Inaba N16961) protein is Putative beta-barrel assembly-enhancing protease.